A 416-amino-acid polypeptide reads, in one-letter code: E3 ubiquitin-protein ligase makorin-2 (416 aa).

C3H1-type zinc fingers lie at residues 2 to 29 (STKQ…HDLA) and 31 to 58 (SKPS…HTKP). Residues 61-144 (AAGGAVGPAP…DPQTSPEMKP (84 aa)) are disordered. The span at 95–123 (HSNEPGKREKKTLVLRDRNLTGLAEDKTP) shows a compositional bias: basic and acidic residues. S139 bears the Phosphoserine mark. The segment at 165 to 192 (SNEPQLCPYAAAGECRFGDACVYLHGDM) adopts a C3H1-type 3 zinc-finger fold. Positions 193 to 222 (CEICRLQVLHPFDPEQRKAHEKMCMSTFEH) are makorin-type Cys-His. The segment at 238-292 (CSICMEVILEKASASERRFGILSNCSHTYCLSCIRQWRCAKQFENPIIKSCPECR) adopts an RING-type zinc-finger fold. The C3H1-type 4 zinc finger occupies 321 to 350 (GMGKKACKYFEQGKGTCPFGSKCLYRHAYP).

Interacts with PDLIM2 (via LIM zinc-binding domain). Interacts with RELA. Highly expressed in the testis, and lower expression in the brain, thymus, heart, lung, liver, spleen, kidney, ovary, uterus, and seminal vesicle (at protein level). Expressed in primary immune cells, such as CD4-positive and CD8-positive T cells, CD19-positive B cells and CD11c-positive dendritic cells, and in embryonic fibroblasts (at protein level).

Its subcellular location is the cytoplasm. It localises to the nucleus. The catalysed reaction is S-ubiquitinyl-[E2 ubiquitin-conjugating enzyme]-L-cysteine + [acceptor protein]-L-lysine = [E2 ubiquitin-conjugating enzyme]-L-cysteine + N(6)-ubiquitinyl-[acceptor protein]-L-lysine.. It participates in protein modification; protein ubiquitination. Its function is as follows. E3 ubiquitin ligase catalyzing the covalent attachment of ubiquitin moieties onto substrate proteins. Promotes the polyubiquitination and proteasome-dependent degradation of RELA/p65, thereby suppressing RELA-mediated NF-kappa-B transactivation and negatively regulating inflammatory responses. Plays a role in the regulation of spermiation and in male fertility. The polypeptide is E3 ubiquitin-protein ligase makorin-2 (Mkrn2) (Mus musculus (Mouse)).